We begin with the raw amino-acid sequence, 258 residues long: Ribosomal RNA large subunit methyltransferase E (258 aa).

The S-adenosyl-L-methionine site is built by G58, W60, D78, D96, and D120. The active-site Proton acceptor is K160.

The protein belongs to the class I-like SAM-binding methyltransferase superfamily. RNA methyltransferase RlmE family.

Its subcellular location is the cytoplasm. It catalyses the reaction uridine(2552) in 23S rRNA + S-adenosyl-L-methionine = 2'-O-methyluridine(2552) in 23S rRNA + S-adenosyl-L-homocysteine + H(+). Its function is as follows. Specifically methylates the uridine in position 2552 of 23S rRNA at the 2'-O position of the ribose in the fully assembled 50S ribosomal subunit. The chain is Ribosomal RNA large subunit methyltransferase E from Methanococcus maripaludis (strain C7 / ATCC BAA-1331).